The primary structure comprises 256 residues: DNA repair protein RecO (256 aa).

Belongs to the RecO family.

In terms of biological role, involved in DNA repair and RecF pathway recombination. This chain is DNA repair protein RecO, found in Streptococcus pneumoniae serotype 2 (strain D39 / NCTC 7466).